A 220-amino-acid polypeptide reads, in one-letter code: Urease accessory protein UreF (220 aa).

It belongs to the UreF family. UreD, UreF and UreG form a complex that acts as a GTP-hydrolysis-dependent molecular chaperone, activating the urease apoprotein by helping to assemble the nickel containing metallocenter of UreC. The UreE protein probably delivers the nickel.

It localises to the cytoplasm. Functionally, required for maturation of urease via the functional incorporation of the urease nickel metallocenter. The protein is Urease accessory protein UreF of Bordetella bronchiseptica (strain ATCC BAA-588 / NCTC 13252 / RB50) (Alcaligenes bronchisepticus).